A 71-amino-acid chain; its full sequence is Large ribosomal subunit protein bL31 (71 aa).

It belongs to the bacterial ribosomal protein bL31 family. Type A subfamily. As to quaternary structure, part of the 50S ribosomal subunit.

In terms of biological role, binds the 23S rRNA. The chain is Large ribosomal subunit protein bL31 (rpmE) from Mycoplasmopsis synoviae (strain 53) (Mycoplasma synoviae).